Here is a 167-residue protein sequence, read N- to C-terminus: Peptidyl-prolyl cis-trans isomerase-like 3 (167 aa).

A PPIase cyclophilin-type domain is found at Met-1 to Ile-160.

Belongs to the cyclophilin-type PPIase family. PPIL3 subfamily.

The catalysed reaction is [protein]-peptidylproline (omega=180) = [protein]-peptidylproline (omega=0). In terms of biological role, PPIases accelerate the folding of proteins. It catalyzes the cis-trans isomerization of proline imidic peptide bonds in oligopeptides. The protein is Peptidyl-prolyl cis-trans isomerase-like 3 (CYP10) of Gibberella zeae (strain ATCC MYA-4620 / CBS 123657 / FGSC 9075 / NRRL 31084 / PH-1) (Wheat head blight fungus).